Consider the following 325-residue polypeptide: GTPase Era (325 aa).

Residues 30–198 (HCGFVAIVGR…KKHVRDHLPK (169 aa)) enclose the Era-type G domain. The interval 38 to 45 (GRPNVGKS) is G1. GTP is bound at residue 38–45 (GRPNVGKS). The tract at residues 64-68 (QTTRH) is G2. The interval 85-88 (DTPG) is G3. Residues 85 to 89 (DTPGL) and 147 to 150 (NKVD) contribute to the GTP site. The interval 147–150 (NKVD) is G4. The G5 stretch occupies residues 177–179 (ISA). One can recognise a KH type-2 domain in the interval 221–307 (VREKLMRFTG…YLETWVKVKS (87 aa)).

The protein belongs to the TRAFAC class TrmE-Era-EngA-EngB-Septin-like GTPase superfamily. Era GTPase family. In terms of assembly, monomer.

It is found in the cytoplasm. The protein resides in the cell inner membrane. Its function is as follows. An essential GTPase that binds both GDP and GTP, with rapid nucleotide exchange. Plays a role in 16S rRNA processing and 30S ribosomal subunit biogenesis and possibly also in cell cycle regulation and energy metabolism. In Vibrio cholerae serotype O1 (strain ATCC 39315 / El Tor Inaba N16961), this protein is GTPase Era.